Here is a 164-residue protein sequence, read N- to C-terminus: Heat shock protein beta-6 (164 aa).

The segment at 1–72 is involved in stabilization of the HSPB1:HSBP6 heterodimer; sequence MEIPVSVQPS…PTAQVSTDPG (72 aa). The residue at position 16 (Ser16) is a Phosphoserine. Positions 56–163 constitute a sHSP domain; the sequence is RAPSVALPTA…PLQSPPGAAA (108 aa). Gln66 is subject to Deamidated glutamine. Position 157 is a phosphoserine (Ser157).

It belongs to the small heat shock protein (HSP20) family. In terms of assembly, homodimer. Small heat shock proteins form high molecular mass oligomers containing variable number of monomers; these oligomers display a very flexible quaternary structure easily exchanging their subunits. Heterooligomer with HSPB1; formed through oligomerization of HSPB1:HSBP6 dimers; subunit exchange leads to formation of at least two different heterooligomeric complexes, differing in variable quantities of HSPB1 and HSPB6 homodimers in addition to HSPB1:HSPB6 heterodimers. Heterooligomer with CRYAB; large heterooligomers consist of CRYAB homodimers and HSPB5:HSPB6 heterodimers but lacking HSPB6 homodimers. Interacts with BAG3. Interacts (phosphorylated) with YWHAZ. Interacts with PDE4A and PDE4D; required for maintenance of the non-phosphorylated state of HSPB6 under basal conditions. Interacts with KDR. Interacts with PRKD1. Post-translationally, phosphorylated at Ser-16 by PKA and probably PKD1K; required to protect cardiomyocytes from apoptosis.

Its subcellular location is the cytoplasm. The protein resides in the nucleus. The protein localises to the secreted. In terms of biological role, small heat shock protein which functions as a molecular chaperone probably maintaining denatured proteins in a folding-competent state. Seems to have versatile functions in various biological processes. Plays a role in regulating muscle function such as smooth muscle vasorelaxation and cardiac myocyte contractility. May regulate myocardial angiogenesis implicating KDR. Overexpression mediates cardioprotection and angiogenesis after induced damage. Stabilizes monomeric YWHAZ thereby supporting YWHAZ chaperone-like activity. In Bos taurus (Bovine), this protein is Heat shock protein beta-6 (HSPB6).